The chain runs to 475 residues: Nitrogenase vanadium-iron protein beta chain (475 aa).

[8Fe-7S] cluster contacts are provided by C31, C56, C115, and S153.

This sequence belongs to the NifD/NifK/NifE/NifN family. In terms of assembly, hexamer of two alpha, two beta, and two delta chains. Requires [8Fe-7S] cluster as cofactor.

The enzyme catalyses N2 + 8 reduced [2Fe-2S]-[ferredoxin] + 16 ATP + 16 H2O = H2 + 8 oxidized [2Fe-2S]-[ferredoxin] + 2 NH4(+) + 16 ADP + 16 phosphate + 6 H(+). In terms of biological role, this vanadium-iron protein is part of the nitrogenase complex that catalyzes the key enzymatic reactions in nitrogen fixation. This Azotobacter vinelandii protein is Nitrogenase vanadium-iron protein beta chain (vnfK).